The primary structure comprises 385 residues: Lipid-A-disaccharide synthase 2 (385 aa).

Belongs to the LpxB family.

The catalysed reaction is a lipid X + a UDP-2-N,3-O-bis[(3R)-3-hydroxyacyl]-alpha-D-glucosamine = a lipid A disaccharide + UDP + H(+). The protein operates within bacterial outer membrane biogenesis; LPS lipid A biosynthesis. Condensation of UDP-2,3-diacylglucosamine and 2,3-diacylglucosamine-1-phosphate to form lipid A disaccharide, a precursor of lipid A, a phosphorylated glycolipid that anchors the lipopolysaccharide to the outer membrane of the cell. In Legionella pneumophila (strain Lens), this protein is Lipid-A-disaccharide synthase 2.